Reading from the N-terminus, the 271-residue chain is MNGSLSQHDQERLSTPYRDGPPEETVYLVTGASRGIGRGLIEAFLQRPKSTVVAWLRNVRTATPALSALTVAEGSRMIIVQLNSDSETDAQAAVQTLREEHGVTHLDVVVANAAMATNFGPASTMPLEHLQAHMMVNMYAPVLLFQATRLMLQQSKQQAKFVLIGAPISTITNMHDYSRAPLTAYGVSKLAANYMVRKFHFENKWLTAFIIDPGHVQTDMGDQGARLMGRPQAPTTVADSVAGICARIDEATKETTSGHFVIHTDGSQLPW.

Residues 1-22 are disordered; the sequence is MNGSLSQHDQERLSTPYRDGPP. Residues Ile36, Asn112, Tyr185, Lys189, Val216, and Thr218 each coordinate NADP(+). The Proton donor role is filled by Tyr185. Lys189 (lowers pKa of active site Tyr) is an active-site residue.

Belongs to the short-chain dehydrogenases/reductases (SDR) family.

Its subcellular location is the cytoplasm. It localises to the cytosol. The protein localises to the vacuole. The catalysed reaction is (1'S)-averantin + NADP(+) = norsolorinic acid + NADPH + H(+). The protein operates within mycotoxin biosynthesis; aflatoxin biosynthesis. Functionally, norsolorinic acid ketoreductase; part of the gene cluster that mediates the biosynthesis of aflatoxins, a group of polyketide-derived furanocoumarins, and part of the most toxic and carcinogenic compounds among the known mycotoxins. The four major aflatoxins produced by A.parasiticus are aflatoxin B1 (AFB1), aflatoxin B2 (AFB2), aflatoxin G1 (AFG1) and aflatoxin G2 (AFG2). Within the aflatoxin pathway, the norsolorinic acid ketoreductase aflD performs the second step by catalyzing the dehydration of norsolorinic acid (NOR) to form (1'S)-averantin (AVN). The biosynthesis of aflatoxins begins with the norsolorinic acid synthase aflC that combines a hexanoyl starter unit produced by the fatty acid synthase aflA/aflB and 7 malonyl-CoA extender units to synthesize the precursor NOR. The second step is the conversion of NOR to averantin and requires the norsolorinic acid ketoreductase aflD, which catalyzes the dehydration of norsolorinic acid to form (1'S)-averantin. The norsolorinic acid reductases aflE and aflF may also play a role in the conversion of NOR to AVN. The cytochrome P450 monooxygenase aflG then catalyzes the hydroxylation of AVN to 5'hydroxyaverantin (HAVN). The next step is performed by the 5'-hydroxyaverantin dehydrogenase aflH that transforms HAVN to 5'-oxoaverantin (OAVN) which is further converted to averufin (AVF) by aflK that plays a dual role in the pathway, as a 5'-oxoaverantin cyclase that mediates conversion of 5'-oxoaverantin, as well as a versicolorin B synthase in a later step in the pathway. The averufin oxidase aflI catalyzes the conversion of AVF to versiconal hemiacetal acetate (VHA). VHA is then the substrate for the versiconal hemiacetal acetate esterase aflJ to yield versiconal (VAL). Versicolorin B synthase aflK then converts VAL to versicolorin B (VERB) by closing the bisfuran ring of aflatoxin which is required for DNA-binding, thus giving to aflatoxin its activity as a mutagen. Then, the activity of the versicolorin B desaturase aflL leads to versicolorin A (VERA). A branch point starts from VERB since it can also be converted to dihydrodemethylsterigmatocystin (DMDHST), probably also by aflL, VERA being a precursor for aflatoxins B1 and G1, and DMDHST for aflatoxins B2 and G2. Next, the versicolorin reductase aflM and the cytochrome P450 monooxygenase aflN are involved in conversion of VERA to demethylsterigmatocystin (DMST). AflX and aflY seem also involved in this step, through probable aflX-mediated epoxide ring-opening step following versicolorin A oxidation and aflY-mediated Baeyer-Villiger oxidation required for the formation of the xanthone ring. The methyltransferase aflO then leads to the modification of DMST to sterigmatocystin (ST), and of DMDHST to dihydrosterigmatocystin (DHST). Both ST and DHST are then substrates of the O-methyltransferase aflP to yield O-methylsterigmatocystin (OMST) and dihydro-O-methylsterigmatocystin (DHOMST), respectively. Finally OMST is converted to aflatoxins B1 and G1, and DHOMST to aflatoxins B2 and G2, via the action of several enzymes including O-methylsterigmatocystin oxidoreductase aflQ, the cytochrome P450 monooxygenase aflU, but also the NADH-dependent flavin oxidoreductase nadA which is specifically required for the synthesis of AFG1. The sequence is that of Norsolorinic acid ketoreductase from Aspergillus parasiticus (strain ATCC 56775 / NRRL 5862 / SRRC 143 / SU-1).